The following is a 688-amino-acid chain: Bifunctional protein GAL10 (688 aa).

The galactowaldenase stretch occupies residues 1–346 (MSEDKYCLVT…TQDNPFGYQI (346 aa)). 6-37 (YCLVTGGAGYIGSHTVVELCEAGYKCIVVDNL) contacts NAD(+). The mutarotase stretch occupies residues 347-688 (KGVDSKFFGD…HKLSYTFRTL (342 aa)). Residue His-525 is the For mutarotase activity of the active site.

It in the N-terminal section; belongs to the NAD(P)-dependent epimerase/dehydratase family. The protein in the C-terminal section; belongs to the aldose epimerase family. NAD(+) is required as a cofactor.

The catalysed reaction is UDP-alpha-D-glucose = UDP-alpha-D-galactose. It catalyses the reaction alpha-D-glucose = beta-D-glucose. Its pathway is carbohydrate metabolism; galactose metabolism. It functions in the pathway carbohydrate metabolism; hexose metabolism. In terms of biological role, mutarotase converts alpha-aldose to the beta-anomer. It is active on D-glucose, L-arabinose, D-xylose, D-galactose, maltose and lactose. This Kluyveromyces lactis (strain ATCC 8585 / CBS 2359 / DSM 70799 / NBRC 1267 / NRRL Y-1140 / WM37) (Yeast) protein is Bifunctional protein GAL10 (GAL10).